Here is a 214-residue protein sequence, read N- to C-terminus: Probable nicotinate-nucleotide adenylyltransferase (214 aa).

Belongs to the NadD family.

It carries out the reaction nicotinate beta-D-ribonucleotide + ATP + H(+) = deamido-NAD(+) + diphosphate. It functions in the pathway cofactor biosynthesis; NAD(+) biosynthesis; deamido-NAD(+) from nicotinate D-ribonucleotide: step 1/1. In terms of biological role, catalyzes the reversible adenylation of nicotinate mononucleotide (NaMN) to nicotinic acid adenine dinucleotide (NaAD). This is Probable nicotinate-nucleotide adenylyltransferase from Psychromonas ingrahamii (strain DSM 17664 / CCUG 51855 / 37).